A 62-amino-acid chain; its full sequence is Large ribosomal subunit protein uL15 (62 aa).

This sequence belongs to the universal ribosomal protein uL15 family.

This chain is Large ribosomal subunit protein uL15 (RPL28), found in Candida albicans (Yeast).